Reading from the N-terminus, the 813-residue chain is Phosphoribosylformylglycinamidine synthase subunit PurL (813 aa).

His56 is an active-site residue. ATP is bound by residues Tyr59 and Lys103. Glu105 lines the Mg(2+) pocket. Substrate contacts are provided by residues 106-109 (SHNH) and Arg128. His107 serves as the catalytic Proton acceptor. Asp129 provides a ligand contact to Mg(2+). Gln253 is a substrate binding site. Asp281 contacts Mg(2+). 325–327 (ESQ) contributes to the substrate binding site. Asn511 and Gly548 together coordinate ATP. Position 549 (Asn549) interacts with Mg(2+). A substrate-binding site is contributed by Ser551.

This sequence belongs to the FGAMS family. As to quaternary structure, monomer. Part of the FGAM synthase complex composed of 1 PurL, 1 PurQ and 2 PurS subunits.

It localises to the cytoplasm. It carries out the reaction N(2)-formyl-N(1)-(5-phospho-beta-D-ribosyl)glycinamide + L-glutamine + ATP + H2O = 2-formamido-N(1)-(5-O-phospho-beta-D-ribosyl)acetamidine + L-glutamate + ADP + phosphate + H(+). It functions in the pathway purine metabolism; IMP biosynthesis via de novo pathway; 5-amino-1-(5-phospho-D-ribosyl)imidazole from N(2)-formyl-N(1)-(5-phospho-D-ribosyl)glycinamide: step 1/2. Its function is as follows. Part of the phosphoribosylformylglycinamidine synthase complex involved in the purines biosynthetic pathway. Catalyzes the ATP-dependent conversion of formylglycinamide ribonucleotide (FGAR) and glutamine to yield formylglycinamidine ribonucleotide (FGAM) and glutamate. The FGAM synthase complex is composed of three subunits. PurQ produces an ammonia molecule by converting glutamine to glutamate. PurL transfers the ammonia molecule to FGAR to form FGAM in an ATP-dependent manner. PurS interacts with PurQ and PurL and is thought to assist in the transfer of the ammonia molecule from PurQ to PurL. This chain is Phosphoribosylformylglycinamidine synthase subunit PurL, found in Corynebacterium jeikeium (strain K411).